A 139-amino-acid polypeptide reads, in one-letter code: Large-conductance mechanosensitive channel (139 aa).

Transmembrane regions (helical) follow at residues 16-36 (VIDL…VDSL) and 83-103 (GQFI…FVAV).

This sequence belongs to the MscL family. Homopentamer.

Its subcellular location is the cell inner membrane. Functionally, channel that opens in response to stretch forces in the membrane lipid bilayer. May participate in the regulation of osmotic pressure changes within the cell. In Aromatoleum aromaticum (strain DSM 19018 / LMG 30748 / EbN1) (Azoarcus sp. (strain EbN1)), this protein is Large-conductance mechanosensitive channel.